Consider the following 262-residue polypeptide: Phenylalanine-4-hydroxylase (262 aa).

Fe cation is bound by residues histidine 121, histidine 126, and glutamate 166.

Belongs to the biopterin-dependent aromatic amino acid hydroxylase family. As to quaternary structure, monomer. The cofactor is Fe(2+).

The enzyme catalyses (6R)-L-erythro-5,6,7,8-tetrahydrobiopterin + L-phenylalanine + O2 = (4aS,6R)-4a-hydroxy-L-erythro-5,6,7,8-tetrahydrobiopterin + L-tyrosine. It participates in amino-acid degradation; L-phenylalanine degradation; acetoacetate and fumarate from L-phenylalanine: step 1/6. The polypeptide is Phenylalanine-4-hydroxylase (phhA) (Pseudomonas aeruginosa (strain ATCC 15692 / DSM 22644 / CIP 104116 / JCM 14847 / LMG 12228 / 1C / PRS 101 / PAO1)).